Reading from the N-terminus, the 536-residue chain is Testis-specific protein 10-interacting protein (536 aa).

Disordered regions lie at residues 1–94, 185–234, and 246–305; these read MLNT…LFSS, SQGL…PGQG, and MEEE…FKGP. Residues 48 to 64 show a composition bias toward low complexity; the sequence is SGDSLQSQSCQQQRSYS. The span at 71–83 shows a compositional bias: basic residues; that stretch reads KERKPRRRNKKGR. Residues 375–451 adopt a coiled-coil conformation; it reads QAWEQQQLKE…LQGIQHRVQA (77 aa). The tract at residues 491–536 is disordered; that stretch reads GNAEGIPRKHRSYRSFGVEMESSPQSPPKTEPTSSQPGRHPSPTLD.

This chain is Testis-specific protein 10-interacting protein (Tsga10ip), found in Rattus norvegicus (Rat).